A 630-amino-acid polypeptide reads, in one-letter code: Polypeptide N-acetylgalactosaminyltransferase 5 (630 aa).

The Cytoplasmic portion of the chain corresponds to 1 to 20 (MTFSTFTRKMRGRMRSNTCR). Residues 21–38 (IVLLTSLVWVIFDFVLIA) traverse the membrane as a helical; Signal-anchor for type II membrane protein segment. Residues 39–630 (RYSDCIGKDG…MESKFKWQAH (592 aa)) are Lumenal-facing. Asn-166 carries an N-linked (GlcNAc...) asparagine glycan. 5 disulfide bridges follow: Cys-177/Cys-410, Cys-401/Cys-479, Cys-513/Cys-530, Cys-553/Cys-568, and Cys-594/Cys-611. Positions 186 to 296 (LPTTSIVIVF…EGWLEPLLAR (111 aa)) are catalytic subdomain A. Positions 227 and 257 each coordinate substrate. Asp-280 and His-282 together coordinate Mn(2+). The interval 356–418 (PLRTPTMAGG…PCSHVGHVFR (63 aa)) is catalytic subdomain B. Trp-387 contributes to the substrate binding site. His-415 provides a ligand contact to Mn(2+). Residues Arg-418 and Tyr-423 each coordinate substrate. Residues 500-622 (YYLGEIRNAE…YGKGQQWLME (123 aa)) form the Ricin B-type lectin domain.

It belongs to the glycosyltransferase 2 family. GalNAc-T subfamily. Requires Mn(2+) as cofactor. As to expression, expressed during oogenesis, in the somatically derived follicle cells that surround the developing oocyte, which are involved in the maturation of the oocyte and construction of the egg shell, as well as playing a role in subsequent embryonic pattern formation. During embryonic stages 9-11, expressed in the primordium of the foregut, midgut and hindgut. Expressed in salivary glands from embryonic stage 12 onwards. During embryonic stages 12-13, expressed in the posterior midgut and hindgut. During embryonic stages 14-17, expressed in the hindgut and the posterior spiracles. Expression is also detected in the epidermis and antennomaxillary complex at embryonic stages 16-17. In third instar larvae, ubiquitously expressed in wing, eye-antennal, leg and haltere imaginal disks.

It localises to the golgi apparatus membrane. The catalysed reaction is L-seryl-[protein] + UDP-N-acetyl-alpha-D-galactosamine = a 3-O-[N-acetyl-alpha-D-galactosaminyl]-L-seryl-[protein] + UDP + H(+). It carries out the reaction L-threonyl-[protein] + UDP-N-acetyl-alpha-D-galactosamine = a 3-O-[N-acetyl-alpha-D-galactosaminyl]-L-threonyl-[protein] + UDP + H(+). The protein operates within protein modification; protein glycosylation. Catalyzes the initial reaction in O-linked oligosaccharide biosynthesis, the transfer of an N-acetyl-D-galactosamine residue to a serine or threonine residue on the protein receptor. It can both act as a peptide transferase that transfers GalNAc onto unmodified peptide substrates, and as a glycopeptide transferase that requires the prior addition of a GalNAc on a peptide before adding additional GalNAc moieties. Prefers EA2 as substrate. In the larval midgut, required for O-glycosylation of apical and luminal proteins within copper cells enabling proper gut acidification. The chain is Polypeptide N-acetylgalactosaminyltransferase 5 from Drosophila melanogaster (Fruit fly).